The chain runs to 130 residues: Aspartate 1-decarboxylase (130 aa).

The active-site Schiff-base intermediate with substrate; via pyruvic acid is serine 25. The residue at position 25 (serine 25) is a Pyruvic acid (Ser). Position 57 (threonine 57) interacts with substrate. Tyrosine 58 acts as the Proton donor in catalysis. A substrate-binding site is contributed by 73–75 (GAT).

Belongs to the PanD family. In terms of assembly, heterooctamer of four alpha and four beta subunits. It depends on pyruvate as a cofactor. Is synthesized initially as an inactive proenzyme, which is activated by self-cleavage at a specific serine bond to produce a beta-subunit with a hydroxyl group at its C-terminus and an alpha-subunit with a pyruvoyl group at its N-terminus.

The protein resides in the cytoplasm. It catalyses the reaction L-aspartate + H(+) = beta-alanine + CO2. Its pathway is cofactor biosynthesis; (R)-pantothenate biosynthesis; beta-alanine from L-aspartate: step 1/1. In terms of biological role, catalyzes the pyruvoyl-dependent decarboxylation of aspartate to produce beta-alanine. The chain is Aspartate 1-decarboxylase from Lactiplantibacillus plantarum (strain ATCC BAA-793 / NCIMB 8826 / WCFS1) (Lactobacillus plantarum).